The sequence spans 740 residues: Anaphase-promoting complex subunit 5 (740 aa).

Position 180 is a phosphoserine (S180). TPR repeat units lie at residues 194-234, 235-285, 286-322, 323-363, 364-403, 404-451, 452-485, 486-525, 526-565, 566-605, 606-645, 646-681, and 682-721; these read QKQA…FNPD, FAEA…GRSL, RYAA…SNDH, VCLQ…YLAS, LGIQ…SELI, DISI…TESF, AVAL…FPPN, SQHA…ALNG, IEGV…TEMV, ISVL…QYLA, SETV…VLDK, GRAM…NLSE, and AKNY…CAMI. A Phosphothreonine modification is found at T217.

Belongs to the APC5 family. In terms of assembly, the mammalian APC/C is composed at least of 14 distinct subunits ANAPC1, ANAPC2, CDC27/APC3, ANAPC4, ANAPC5, CDC16/APC6, ANAPC7, CDC23/APC8, ANAPC10, ANAPC11, CDC26/APC12, ANAPC13, ANAPC15 and ANAPC16 that assemble into a complex of at least 19 chains with a combined molecular mass of around 1.2 MDa; APC/C interacts with FZR1 and FBXO5.

It is found in the nucleus. Its subcellular location is the cytoplasm. The protein localises to the cytoskeleton. It localises to the spindle. It functions in the pathway protein modification; protein ubiquitination. Its function is as follows. Component of the anaphase promoting complex/cyclosome (APC/C), a cell cycle-regulated E3 ubiquitin ligase that controls progression through mitosis and the G1 phase of the cell cycle. The APC/C complex acts by mediating ubiquitination and subsequent degradation of target proteins: it mainly mediates the formation of 'Lys-11'-linked polyubiquitin chains and, to a lower extent, the formation of 'Lys-48'- and 'Lys-63'-linked polyubiquitin chains. The APC/C complex catalyzes assembly of branched 'Lys-11'-/'Lys-48'-linked branched ubiquitin chains on target proteins. The polypeptide is Anaphase-promoting complex subunit 5 (Anapc5) (Mus musculus (Mouse)).